Reading from the N-terminus, the 661-residue chain is UvrABC system protein B (661 aa).

One can recognise a Helicase ATP-binding domain in the interval 31–186; that stretch reads DNIEGGEKAQ…LLNALVDIQF (156 aa). 44 to 51 lines the ATP pocket; that stretch reads GATGTGKT. Positions 97–120 match the Beta-hairpin motif; that stretch reads YYDYYQPEAYVPSSDTYIEKDSSV. Residues 435-601 form the Helicase C-terminal domain; it reads QMDDLLGEIN…TIKKEIRDLI (167 aa). A UVR domain is found at 626–661; the sequence is KAMIKKLEGQMQEAAEVLDFELAAQIRDMVIELKNM.

The protein belongs to the UvrB family. In terms of assembly, forms a heterotetramer with UvrA during the search for lesions. Interacts with UvrC in an incision complex.

It is found in the cytoplasm. Its function is as follows. The UvrABC repair system catalyzes the recognition and processing of DNA lesions. A damage recognition complex composed of 2 UvrA and 2 UvrB subunits scans DNA for abnormalities. Upon binding of the UvrA(2)B(2) complex to a putative damaged site, the DNA wraps around one UvrB monomer. DNA wrap is dependent on ATP binding by UvrB and probably causes local melting of the DNA helix, facilitating insertion of UvrB beta-hairpin between the DNA strands. Then UvrB probes one DNA strand for the presence of a lesion. If a lesion is found the UvrA subunits dissociate and the UvrB-DNA preincision complex is formed. This complex is subsequently bound by UvrC and the second UvrB is released. If no lesion is found, the DNA wraps around the other UvrB subunit that will check the other stand for damage. The sequence is that of UvrABC system protein B from Streptococcus suis (strain 98HAH33).